The sequence spans 392 residues: Erythronate-4-phosphate dehydrogenase (392 aa).

Residues Ser-48 and Thr-69 each contribute to the substrate site. Asp-149 contributes to the NAD(+) binding site. Arg-215 is a catalytic residue. An NAD(+)-binding site is contributed by Asp-239. Glu-244 is a catalytic residue. The active-site Proton donor is the His-261. Residue Gly-264 participates in NAD(+) binding. Tyr-265 is a substrate binding site.

The protein belongs to the D-isomer specific 2-hydroxyacid dehydrogenase family. PdxB subfamily. As to quaternary structure, homodimer.

The protein localises to the cytoplasm. It carries out the reaction 4-phospho-D-erythronate + NAD(+) = (R)-3-hydroxy-2-oxo-4-phosphooxybutanoate + NADH + H(+). The protein operates within cofactor biosynthesis; pyridoxine 5'-phosphate biosynthesis; pyridoxine 5'-phosphate from D-erythrose 4-phosphate: step 2/5. Its function is as follows. Catalyzes the oxidation of erythronate-4-phosphate to 3-hydroxy-2-oxo-4-phosphonooxybutanoate. This chain is Erythronate-4-phosphate dehydrogenase, found in Salinibacter ruber (strain DSM 13855 / M31).